We begin with the raw amino-acid sequence, 145 residues long: L-alanine exporter AlaE (145 aa).

4 helical membrane-spanning segments follow: residues Phe16–Met36, Leu42–Tyr62, Leu86–Ala106, and Ile111–Tyr131.

This sequence belongs to the AlaE exporter family.

The protein localises to the cell inner membrane. Exports L-alanine. The polypeptide is L-alanine exporter AlaE (Pectobacterium parmentieri (strain WPP163) (Pectobacterium wasabiae (strain WPP163))).